Consider the following 358-residue polypeptide: Fructose-bisphosphate aldolase 7, cytosolic (358 aa).

Ser-2 is subject to N-acetylserine. Arg-52 serves as a coordination point for substrate. Position 68 is an S-glutathionyl cysteine; transient (Cys-68). Lys-142 contacts substrate. S-glutathionyl cysteine; transient; alternate is present on Cys-173. Cys-173 carries the S-nitrosocysteine; transient; alternate modification. The active-site Proton acceptor is Glu-183. Lys-225 functions as the Schiff-base intermediate with dihydroxyacetone-P in the catalytic mechanism. Position 266–268 (266–268 (SGI)) interacts with substrate.

The protein belongs to the class I fructose-bisphosphate aldolase family. As to quaternary structure, homotetramer. In terms of processing, S-glutathionylated at Cys-68 and Cys-173. S-nitrosylated at Cys-173. In terms of tissue distribution, highly expressed in flowers, and at lower levels in rosettes leaves and cauline leaves.

Its subcellular location is the cytoplasm. It localises to the cytosol. It catalyses the reaction beta-D-fructose 1,6-bisphosphate = D-glyceraldehyde 3-phosphate + dihydroxyacetone phosphate. Its pathway is carbohydrate degradation; glycolysis; D-glyceraldehyde 3-phosphate and glycerone phosphate from D-glucose: step 4/4. Plays a key role in glycolysis and gluconeogenesis. This chain is Fructose-bisphosphate aldolase 7, cytosolic, found in Arabidopsis thaliana (Mouse-ear cress).